We begin with the raw amino-acid sequence, 78 residues long: Exodeoxyribonuclease 7 small subunit (78 aa).

It belongs to the XseB family. In terms of assembly, heterooligomer composed of large and small subunits.

It is found in the cytoplasm. It catalyses the reaction Exonucleolytic cleavage in either 5'- to 3'- or 3'- to 5'-direction to yield nucleoside 5'-phosphates.. Functionally, bidirectionally degrades single-stranded DNA into large acid-insoluble oligonucleotides, which are then degraded further into small acid-soluble oligonucleotides. This chain is Exodeoxyribonuclease 7 small subunit, found in Cutibacterium acnes (strain DSM 16379 / KPA171202) (Propionibacterium acnes).